The following is a 118-amino-acid chain: Large ribosomal subunit protein bL19 (118 aa).

Belongs to the bacterial ribosomal protein bL19 family.

In terms of biological role, this protein is located at the 30S-50S ribosomal subunit interface and may play a role in the structure and function of the aminoacyl-tRNA binding site. This chain is Large ribosomal subunit protein bL19, found in Helicobacter pylori (strain G27).